The primary structure comprises 383 residues: ATP phosphoribosyltransferase regulatory subunit (383 aa).

Belongs to the class-II aminoacyl-tRNA synthetase family. HisZ subfamily. In terms of assembly, heteromultimer composed of HisG and HisZ subunits.

The protein localises to the cytoplasm. The protein operates within amino-acid biosynthesis; L-histidine biosynthesis; L-histidine from 5-phospho-alpha-D-ribose 1-diphosphate: step 1/9. Functionally, required for the first step of histidine biosynthesis. May allow the feedback regulation of ATP phosphoribosyltransferase activity by histidine. The chain is ATP phosphoribosyltransferase regulatory subunit from Paraburkholderia xenovorans (strain LB400).